The sequence spans 677 residues: Fidgetin-like protein 1 (677 aa).

A compositionally biased stretch (polar residues) spans 203–216 (TSSAPSGESTTATF). Disordered regions lie at residues 203-232 (TSSA…PQSF), 249-324 (VPSG…SFNG), and 337-378 (GIFG…TDDR). Lysine 226 participates in a covalent cross-link: Glycyl lysine isopeptide (Lys-Gly) (interchain with G-Cter in SUMO2). Residues 264–280 (DSDTINMLSNPTLNKAP) are compositionally biased toward polar residues. The span at 281 to 292 (SKTEDSGQREDN) shows a compositional bias: basic and acidic residues. Lysine 341 bears the N6-acetyllysine mark. Over residues 347–358 (SNKQDGSEQNGN) the composition is skewed to polar residues. Residues alanine 407 and 447–452 (GTGKTL) each bind ATP.

It belongs to the AAA ATPase family. Hexamer. Interacts (via N-terminal one-half region) with RAD51; the interaction is direct. Interacts (via N-terminal one-half region) with SPIDR (via the C-terminal region); the interaction is direct. Interacts with FIRRM; may regulate homologous recombination. The cofactor is Mg(2+).

The protein localises to the nucleus. It is found in the cytoplasm. Its subcellular location is the perinuclear region. The catalysed reaction is ATP + H2O = ADP + phosphate + H(+). Functionally, involved in DNA double-strand break (DBS) repair via homologous recombination (HR). Recruited at DSB sites independently of BRCA2, RAD51 and RAD51 paralogs in a H2AX-dependent manner. May regulate osteoblast proliferation and differentiation. May play a role in the control of male meiosis dynamic. The sequence is that of Fidgetin-like protein 1 (Fignl1) from Rattus norvegicus (Rat).